A 464-amino-acid polypeptide reads, in one-letter code: uncharacterized protein (464 aa).

Transmembrane regions (helical) follow at residues 7-27, 37-57, 94-114, 121-141, 153-173, 196-216, 231-251, 282-302, 329-349, 359-379, 401-421, and 432-452; these read VLNV…LRTL, LVFY…LVAA, VVWY…LIAP, FYLL…NCFG, ASIG…VWIF, LSLF…AVHA, FYSA…IVIV, VIAV…IIGP, VAIL…FILL, LSDL…AAAI, MSLI…VGFI, and FLFE…PWLF.

It belongs to the amino acid-polyamine-organocation (APC) superfamily.

Its subcellular location is the cell membrane. This is an uncharacterized protein from Legionella pneumophila subsp. pneumophila (strain Philadelphia 1 / ATCC 33152 / DSM 7513).